A 397-amino-acid chain; its full sequence is LL-diaminopimelate aminotransferase (397 aa).

Residues Y14 and G41 each contribute to the substrate site. Pyridoxal 5'-phosphate-binding positions include Y71, 104 to 105, Y128, N174, Y205, and 233 to 235; these read AK and SFS. K105, Y128, and N174 together coordinate substrate. The residue at position 236 (K236) is an N6-(pyridoxal phosphate)lysine. Residues R244 and N275 each coordinate pyridoxal 5'-phosphate. Residues N275 and R368 each coordinate substrate.

The protein belongs to the class-I pyridoxal-phosphate-dependent aminotransferase family. LL-diaminopimelate aminotransferase subfamily. Homodimer. Requires pyridoxal 5'-phosphate as cofactor.

The enzyme catalyses (2S,6S)-2,6-diaminopimelate + 2-oxoglutarate = (S)-2,3,4,5-tetrahydrodipicolinate + L-glutamate + H2O + H(+). It functions in the pathway amino-acid biosynthesis; L-lysine biosynthesis via DAP pathway; LL-2,6-diaminopimelate from (S)-tetrahydrodipicolinate (aminotransferase route): step 1/1. Involved in the synthesis of meso-diaminopimelate (m-DAP or DL-DAP), required for both lysine and peptidoglycan biosynthesis. Catalyzes the direct conversion of tetrahydrodipicolinate to LL-diaminopimelate. The polypeptide is LL-diaminopimelate aminotransferase (Chlamydia pneumoniae (Chlamydophila pneumoniae)).